The sequence spans 737 residues: Elongation factor 2 (737 aa).

Positions 18–262 constitute a tr-type G domain; the sequence is TRVRNIGIIA…AVIKFVPNPR (245 aa). GTP contacts are provided by residues 27 to 34, 93 to 97, and 147 to 150; these read AHVDHGKT, DTPGH, and NKVD. A Diphthamide modification is found at histidine 604.

Belongs to the TRAFAC class translation factor GTPase superfamily. Classic translation factor GTPase family. EF-G/EF-2 subfamily.

It localises to the cytoplasm. Functionally, catalyzes the GTP-dependent ribosomal translocation step during translation elongation. During this step, the ribosome changes from the pre-translocational (PRE) to the post-translocational (POST) state as the newly formed A-site-bound peptidyl-tRNA and P-site-bound deacylated tRNA move to the P and E sites, respectively. Catalyzes the coordinated movement of the two tRNA molecules, the mRNA and conformational changes in the ribosome. This chain is Elongation factor 2 (fusA), found in Sulfolobus acidocaldarius (strain ATCC 33909 / DSM 639 / JCM 8929 / NBRC 15157 / NCIMB 11770).